Here is a 284-residue protein sequence, read N- to C-terminus: Bifunctional protein FolD 1 (284 aa).

Residues 164–166 (GRS), S189, and I230 contribute to the NADP(+) site.

This sequence belongs to the tetrahydrofolate dehydrogenase/cyclohydrolase family. As to quaternary structure, homodimer.

The catalysed reaction is (6R)-5,10-methylene-5,6,7,8-tetrahydrofolate + NADP(+) = (6R)-5,10-methenyltetrahydrofolate + NADPH. It carries out the reaction (6R)-5,10-methenyltetrahydrofolate + H2O = (6R)-10-formyltetrahydrofolate + H(+). The protein operates within one-carbon metabolism; tetrahydrofolate interconversion. Functionally, catalyzes the oxidation of 5,10-methylenetetrahydrofolate to 5,10-methenyltetrahydrofolate and then the hydrolysis of 5,10-methenyltetrahydrofolate to 10-formyltetrahydrofolate. The sequence is that of Bifunctional protein FolD 1 from Rubrobacter xylanophilus (strain DSM 9941 / JCM 11954 / NBRC 16129 / PRD-1).